The sequence spans 262 residues: 14-3-3 protein epsilon (262 aa).

The disordered stretch occupies residues 236–262 (QAEEVDPNAGDGEPKEQIQDVEDQDVS). Ser262 carries the post-translational modification Phosphoserine.

This sequence belongs to the 14-3-3 family. As to quaternary structure, homodimer. Interacts with phosphorylated yki. Interacts with pav (when serine phosphorylated); the interaction is necessary for association of the complex pav-14-3-3epsilon complex to the microtubules, thereby inhibiting microtubule sliding.

In terms of biological role, positively regulates Ras-mediated pathways. Acts downstream or parallel to Raf, but upstream of nuclear factors in Ras signaling. Three mutants have been isolated, that suppress the rough eye phenotype caused by mutated Ras1 (sev-Ras1 v12). Inhibits yki activity by restricting its nuclear localization. Together with pav, has a role in the inhibition of microtubule sliding during neurite outgrowth. The protein is 14-3-3 protein epsilon (14-3-3epsilon) of Drosophila melanogaster (Fruit fly).